The sequence spans 246 residues: 3-oxoacyl-[acyl-carrier-protein] reductase FabG (246 aa).

NADP(+) contacts are provided by residues 11 to 14 (GASR), Ser-36, 62 to 63 (DV), and Asn-89. Position 141 (Ser-141) interacts with substrate. Tyr-154 acts as the Proton acceptor in catalysis. NADP(+)-binding positions include 154–158 (YVAAK) and Ile-187.

It belongs to the short-chain dehydrogenases/reductases (SDR) family. In terms of assembly, homotetramer.

It catalyses the reaction a (3R)-hydroxyacyl-[ACP] + NADP(+) = a 3-oxoacyl-[ACP] + NADPH + H(+). It participates in lipid metabolism; fatty acid biosynthesis. Its function is as follows. Catalyzes the NADPH-dependent reduction of beta-ketoacyl-ACP substrates to beta-hydroxyacyl-ACP products, the first reductive step in the elongation cycle of fatty acid biosynthesis. The sequence is that of 3-oxoacyl-[acyl-carrier-protein] reductase FabG (fabG) from Bacillus subtilis (strain 168).